Consider the following 688-residue polypeptide: Two-component response regulator ORR23 (688 aa).

The 116-residue stretch at 25 to 140 (RVLAVDDDPV…ELRNIWQHVI (116 aa)) folds into the Response regulatory domain. At D76 the chain carries 4-aspartylphosphate. The segment at 161–212 (PPNADSDHVHGHVTCGSPDQSGRPSKKRKEYCSEEEDEGEVNTQDIDDPSAP) is disordered. Acidic residues predominate over residues 193–208 (SEEEDEGEVNTQDIDD). The segment at residues 211 to 270 (APKKPRVVWSVELHRKFVAAVNQLGIDKAVPKRILELMNVEKLTRENVASHLQKYRLYLK) is a DNA-binding region (myb-like GARP).

The protein belongs to the ARR family. Type-B subfamily. Post-translationally, two-component system major event consists of a His-to-Asp phosphorelay between a sensor histidine kinase (HK) and a response regulator (RR). In plants, the His-to-Asp phosphorelay involves an additional intermediate named Histidine-containing phosphotransfer protein (HPt). This multistep phosphorelay consists of a His-Asp-His-Asp sequential transfer of a phosphate group between first a His and an Asp of the HK protein, followed by the transfer to a conserved His of the HPt protein and finally the transfer to an Asp in the receiver domain of the RR protein.

It is found in the nucleus. Its function is as follows. Transcriptional activator that binds specific DNA sequence. Functions as a response regulator involved in His-to-Asp phosphorelay signal transduction system. Phosphorylation of the Asp residue in the receiver domain activates the ability of the protein to promote the transcription of target genes. May directly activate some type-A response regulators in response to cytokinins. This Oryza sativa subsp. japonica (Rice) protein is Two-component response regulator ORR23.